The primary structure comprises 134 residues: Putative protein KRIP1 (134 aa).

The tract at residues 1–134 (MSPVHRSRTS…PDPALPLQML (134 aa)) is disordered. 3 stretches are compositionally biased toward polar residues: residues 9–24 (TSQT…TLSF), 43–55 (SQPN…SHVS), and 64–79 (CSQS…TNPN). Over residues 119-128 (PAKPALPDPA) the composition is skewed to pro residues.

As to expression, abundant expression is found in prostate, restricted to cells of epithelial origin in normal and diseased glands. Very low expression is detected in pancreas and ovary.

The protein localises to the cytoplasm. It localises to the nucleus. The polypeptide is Putative protein KRIP1 (KLKP1) (Homo sapiens (Human)).